Reading from the N-terminus, the 758-residue chain is 5-methyltetrahydropteroyltriglutamate--homocysteine methyltransferase (758 aa).

5-methyltetrahydropteroyltri-L-glutamate is bound by residues arginine 17–lysine 20 and lysine 117. Residues isoleucine 434–serine 436 and glutamate 487 each bind L-homocysteine. Residues isoleucine 434–serine 436 and glutamate 487 each bind L-methionine. 5-methyltetrahydropteroyltri-L-glutamate is bound by residues arginine 518–cysteine 519 and tryptophan 564. Residue aspartate 602 coordinates L-homocysteine. Aspartate 602 provides a ligand contact to L-methionine. Glutamate 608 lines the 5-methyltetrahydropteroyltri-L-glutamate pocket. The Zn(2+) site is built by histidine 644, cysteine 646, and glutamate 668. Histidine 697 functions as the Proton donor in the catalytic mechanism. Residue cysteine 729 participates in Zn(2+) binding.

It belongs to the vitamin-B12 independent methionine synthase family. Requires Zn(2+) as cofactor.

The catalysed reaction is 5-methyltetrahydropteroyltri-L-glutamate + L-homocysteine = tetrahydropteroyltri-L-glutamate + L-methionine. It functions in the pathway amino-acid biosynthesis; L-methionine biosynthesis via de novo pathway; L-methionine from L-homocysteine (MetE route): step 1/1. In terms of biological role, catalyzes the transfer of a methyl group from 5-methyltetrahydrofolate to homocysteine resulting in methionine formation. This chain is 5-methyltetrahydropteroyltriglutamate--homocysteine methyltransferase, found in Yersinia enterocolitica serotype O:8 / biotype 1B (strain NCTC 13174 / 8081).